We begin with the raw amino-acid sequence, 411 residues long: MRAHPGGGRCCPEQEEGESAAGGSGAGGDSAIEQGGQGSALAPSPVSGVRREGARGGGRGRGRWKQAGRGGGVCGRGRGRGRGRGRGRGRGRGRGRPPSGGSGLGGDGGGCGGGGSGGGGAPRREPVPFPSGSAGPGPRGPRATESGKRMDCPALPPGWKKEEVIRKSGLSAGKSDVYYFSPSGKKFRSKPQLARYLGNTVDLSSFDFRTGKMMPSKLQKNKQRLRNDPLNQNKGKPDLNTTLPIRQTASIFKQPVTKVTNHPSNKVKSDPQRMNEQPRQLFWEKRLQGLSASDVTEQIIKTMELPKGLQGVGPGSNDETLLSAVASALHTSSAPITGQVSAAVEKNPAVWLNTSQPLCKAFIVTDEDIRKQEERVQQVRKKLEEALMADILSRAADTEEMDIEMDSGDEA.

Residues 1 to 149 (MRAHPGGGRC…GPRATESGKR (149 aa)) are required for interaction with DHX9 and PRMT5. Residues 1-158 (MRAHPGGGRC…RMDCPALPPG (158 aa)) are disordered. Positions 77-95 (GRGRGRGRGRGRGRGRGRG) are enriched in basic residues. The span at 98–121 (PSGGSGLGGDGGGCGGGGSGGGGA) shows a compositional bias: gly residues. An MBD domain is found at 145–213 (ESGKRMDCPA…SSFDFRTGKM (69 aa)). The residue at position 181 (Ser-181) is a Phosphoserine. The interval 214 to 241 (MPSKLQKNKQRLRNDPLNQNKGKPDLNT) is disordered. The segment covering 229–241 (PLNQNKGKPDLNT) has biased composition (polar residues). Ser-407 carries the phosphoserine modification.

In terms of assembly, heterodimer with MBD3 (via N-terminus). Component of the MeCP1 complex that contains HDAC1 and HDAC2. Component of the nucleosome remodeling and deacetylase (NuRD) repressor complex, composed of core proteins MTA1, MTA2, MTA3, RBBP4, RBBP7, HDAC1, HDAC2, MBD2, MBD3, and peripherally associated proteins CDK2AP1, CDK2AP2, GATAD2A, GATAD2B, CHD3, CHD4 and CHD5. The exact stoichiometry of the NuRD complex is unknown, and some subunits such as MBD2 and MBD3, GATAD2A and GATAD2B, and CHD3, CHD4 and CHD5 define mutually exclusive NuRD complexes. Interacts with CDK2AP1. Interacts with DHX9. Interacts with DNMT1. Interacts with GATAD2A/p66-alpha. Interacts with GATAD2B/p66-beta. Interacts with GPN1. Interacts with MIZF. Interacts with PRMT5. Interacts with SIN3A. Interacts with SPHK2. In terms of tissue distribution, highly expressed in brain, heart, kidney, stomach, testis and placenta.

The protein localises to the nucleus. Its subcellular location is the chromosome. Its function is as follows. Binds CpG islands in promoters where the DNA is methylated at position 5 of cytosine within CpG dinucleotides. Binds hemimethylated DNA as well. Recruits histone deacetylases and DNA methyltransferases to chromatin. Acts as a component of the histone deacetylase NuRD complex which participates in the remodeling of chromatin. Acts as a transcriptional repressor and plays a role in gene silencing. Functions as a scaffold protein, targeting GATAD2A and GATAD2B to chromatin to promote repression. May enhance the activation of some unmethylated cAMP-responsive promoters. The chain is Methyl-CpG-binding domain protein 2 from Homo sapiens (Human).